We begin with the raw amino-acid sequence, 238 residues long: Envelope glycoprotein G (238 aa).

An N-terminal signal peptide occupies residues 1–24 (MSQGAMRAVVPIIPFLLVLVGVSG). Residues 25–189 (VPTNVSSTTQ…SFLTASPALD (165 aa)) are Virion surface-facing. 2 N-linked (GlcNAc...) asparagine; by host glycosylation sites follow: Asn28 and Asn49. 2 stretches are compositionally biased toward polar residues: residues 28–42 (NVSS…TTGR) and 49–68 (NMTQ…TTPD). A disordered region spans residues 28 to 171 (NVSSTTQPQL…LTSKGRPLVP (144 aa)). Over residues 78–88 (LEEEEEEEGAG) the composition is skewed to acidic residues. Over residues 89–100 (DGEHLEGGDGTR) the composition is skewed to basic and acidic residues. The helical transmembrane segment at 190–210 (TLFVVSTVIHTLSFLCIGAMA) threads the bilayer. Topologically, residues 211 to 238 (THLCGGWSRRGRRTHPSVRYVCLPSERG) are intravirion.

This sequence belongs to the alphaherpesvirinae glycoprotein G family.

Its subcellular location is the virion membrane. Chemokine-binding protein that inhibits neutrophils' chemotaxis. The sequence is that of Envelope glycoprotein G (gG) from Human herpesvirus 1 (strain 17) (HHV-1).